We begin with the raw amino-acid sequence, 147 residues long: Epididymal secretory protein E3-beta (147 aa).

A signal peptide spans 1 to 25 (MASSLKIWGTLLALLCILCTLLVQS).

As to expression, epididymis.

It localises to the secreted. Functionally, possible function in sperm maturation. This is Epididymal secretory protein E3-beta (EDDM3B) from Homo sapiens (Human).